A 303-amino-acid polypeptide reads, in one-letter code: UDP-3-O-acyl-N-acetylglucosamine deacetylase (303 aa).

The Zn(2+) site is built by H78, H237, and D241. The Proton donor role is filled by H264.

This sequence belongs to the LpxC family. Zn(2+) is required as a cofactor.

The catalysed reaction is a UDP-3-O-[(3R)-3-hydroxyacyl]-N-acetyl-alpha-D-glucosamine + H2O = a UDP-3-O-[(3R)-3-hydroxyacyl]-alpha-D-glucosamine + acetate. The protein operates within glycolipid biosynthesis; lipid IV(A) biosynthesis; lipid IV(A) from (3R)-3-hydroxytetradecanoyl-[acyl-carrier-protein] and UDP-N-acetyl-alpha-D-glucosamine: step 2/6. In terms of biological role, catalyzes the hydrolysis of UDP-3-O-myristoyl-N-acetylglucosamine to form UDP-3-O-myristoylglucosamine and acetate, the committed step in lipid A biosynthesis. The chain is UDP-3-O-acyl-N-acetylglucosamine deacetylase from Stenotrophomonas maltophilia (strain R551-3).